The primary structure comprises 165 residues: Neurotrophin-3 (165 aa).

Residues 1–3 (IQS) form the signal peptide. The propeptide occupies 4-119 (TSMDQGSLSE…VLNRTSRRKR (116 aa)). Residue Asn112 is glycosylated (N-linked (GlcNAc...) asparagine).

It belongs to the NGF-beta family.

It is found in the secreted. Its function is as follows. Seems to promote the survival of visceral and proprioceptive sensory neurons. This is Neurotrophin-3 (NTF3) from Anilius scytale (Coral cylinder snake).